A 335-amino-acid polypeptide reads, in one-letter code: Galactinol synthase 2 (335 aa).

Residue Lys-103 is part of the active site. Residues Asp-119, Asp-121, and His-257 each coordinate Mn(2+).

This sequence belongs to the glycosyltransferase 8 family. Galactosyltransferase subfamily. The cofactor is a divalent metal cation. As to expression, accumulates in mature seeds.

Its subcellular location is the cytoplasm. It catalyses the reaction myo-inositol + UDP-alpha-D-galactose = alpha-D-galactosyl-(1-&gt;3)-1D-myo-inositol + UDP + H(+). Galactinol synthase involved in the biosynthesis of raffinose family oligosaccharides (RFOs) that function as osmoprotectants. Promotes stress tolerance of factors such as drought, chilling, salinity and methylviologen (MV), a superoxide radical generating drug, by mediating an increase in levels of the endogenous osmoprotective compounds, galactinol and raffinose. This Arabidopsis thaliana (Mouse-ear cress) protein is Galactinol synthase 2 (GOLS2).